A 466-amino-acid chain; its full sequence is 3-isopropylmalate dehydratase large subunit (466 aa).

[4Fe-4S] cluster is bound by residues Cys-347, Cys-407, and Cys-410.

This sequence belongs to the aconitase/IPM isomerase family. LeuC type 1 subfamily. Heterodimer of LeuC and LeuD. It depends on [4Fe-4S] cluster as a cofactor.

It catalyses the reaction (2R,3S)-3-isopropylmalate = (2S)-2-isopropylmalate. It functions in the pathway amino-acid biosynthesis; L-leucine biosynthesis; L-leucine from 3-methyl-2-oxobutanoate: step 2/4. Catalyzes the isomerization between 2-isopropylmalate and 3-isopropylmalate, via the formation of 2-isopropylmaleate. This chain is 3-isopropylmalate dehydratase large subunit, found in Escherichia coli O127:H6 (strain E2348/69 / EPEC).